The following is a 255-amino-acid chain: 1-(5-phosphoribosyl)-5-[(5-phosphoribosylamino)methylideneamino] imidazole-4-carboxamide isomerase (255 aa).

The active-site Proton acceptor is aspartate 8. Aspartate 129 functions as the Proton donor in the catalytic mechanism.

Belongs to the HisA/HisF family.

It is found in the cytoplasm. The catalysed reaction is 1-(5-phospho-beta-D-ribosyl)-5-[(5-phospho-beta-D-ribosylamino)methylideneamino]imidazole-4-carboxamide = 5-[(5-phospho-1-deoxy-D-ribulos-1-ylimino)methylamino]-1-(5-phospho-beta-D-ribosyl)imidazole-4-carboxamide. It participates in amino-acid biosynthesis; L-histidine biosynthesis; L-histidine from 5-phospho-alpha-D-ribose 1-diphosphate: step 4/9. The protein is 1-(5-phosphoribosyl)-5-[(5-phosphoribosylamino)methylideneamino] imidazole-4-carboxamide isomerase of Prochlorococcus marinus (strain MIT 9301).